Reading from the N-terminus, the 362-residue chain is Serine/threonine-protein kinase-like protein At3g51990 (362 aa).

The signal sequence occupies residues M1–G24. A compositionally biased stretch (low complexity) spans S21–A32. A disordered region spans residues S21–R43. Residues F59–L329 form the Protein kinase domain. Residues L65–V73 and K86 contribute to the ATP site. N-linked (GlcNAc...) asparagine glycosylation is present at N136. Residue D185 is the Proton acceptor of the active site. The residue at position 219 (S219) is a Phosphoserine. Residues T220 and T225 each carry the phosphothreonine modification. Y233 carries the phosphotyrosine modification.

This sequence belongs to the protein kinase superfamily. Ser/Thr protein kinase family.

The protein resides in the secreted. It carries out the reaction L-seryl-[protein] + ATP = O-phospho-L-seryl-[protein] + ADP + H(+). It catalyses the reaction L-threonyl-[protein] + ATP = O-phospho-L-threonyl-[protein] + ADP + H(+). This is Serine/threonine-protein kinase-like protein At3g51990 from Arabidopsis thaliana (Mouse-ear cress).